The sequence spans 396 residues: Protein BOP3 (396 aa).

6 disordered regions span residues 1-22 (MSTF…NNVN), 98-126 (GVPA…ENLP), 145-168 (PTPM…GISH), 203-239 (VARR…KFTN), 254-274 (RDQQ…QQDL), and 355-396 (REGR…LNST). 3 stretches are compositionally biased toward polar residues: residues 111–124 (QPHN…SSEN), 159–168 (ASSSTGGISH), and 210–230 (GTKS…SRNL). The span at 355–369 (REGRQVHDDLDDRTC) shows a compositional bias: basic and acidic residues. Residues 370-396 (SESSSRNESPVRTITKDNSVGKILNST) show a composition bias toward polar residues.

It is found in the cytoplasm. Its subcellular location is the nucleus. Functionally, involved in resistance to methylmercury. Overexpression suppresses a PAM1-SLV3 double null mutation. The sequence is that of Protein BOP3 (BOP3) from Saccharomyces cerevisiae (strain ATCC 204508 / S288c) (Baker's yeast).